The sequence spans 418 residues: Tyrosine--tRNA ligase 1 (418 aa).

Tyr34 is a binding site for L-tyrosine. The short motif at 39 to 48 (PTADSLHIGH) is the 'HIGH' region element. The L-tyrosine site is built by Tyr169 and Gln173. Positions 230–234 (KFGKT) match the 'KMSKS' region motif. An ATP-binding site is contributed by Lys233. Residues 352-418 (TVLIDLLVES…GKKKYFLIRY (67 aa)) form the S4 RNA-binding domain.

This sequence belongs to the class-I aminoacyl-tRNA synthetase family. TyrS type 1 subfamily. As to quaternary structure, homodimer.

Its subcellular location is the cytoplasm. The enzyme catalyses tRNA(Tyr) + L-tyrosine + ATP = L-tyrosyl-tRNA(Tyr) + AMP + diphosphate + H(+). Catalyzes the attachment of tyrosine to tRNA(Tyr) in a two-step reaction: tyrosine is first activated by ATP to form Tyr-AMP and then transferred to the acceptor end of tRNA(Tyr). In Bacillus anthracis, this protein is Tyrosine--tRNA ligase 1.